The chain runs to 792 residues: Endonuclease MutS2 (792 aa).

334-341 (GPNTGGKT) is an ATP binding site. In terms of domain architecture, Smr spans 717–792 (IDLRGMMLSE…ENGVTVVELK (76 aa)).

The protein belongs to the DNA mismatch repair MutS family. MutS2 subfamily. In terms of assembly, homodimer. Binds to stalled ribosomes, contacting rRNA.

Its function is as follows. Endonuclease that is involved in the suppression of homologous recombination and thus may have a key role in the control of bacterial genetic diversity. Acts as a ribosome collision sensor, splitting the ribosome into its 2 subunits. Detects stalled/collided 70S ribosomes which it binds and splits by an ATP-hydrolysis driven conformational change. Acts upstream of the ribosome quality control system (RQC), a ribosome-associated complex that mediates the extraction of incompletely synthesized nascent chains from stalled ribosomes and their subsequent degradation. Probably generates substrates for RQC. This chain is Endonuclease MutS2, found in Ruminiclostridium cellulolyticum (strain ATCC 35319 / DSM 5812 / JCM 6584 / H10) (Clostridium cellulolyticum).